Here is a 389-residue protein sequence, read N- to C-terminus: Lipid-A-disaccharide synthase (389 aa).

This sequence belongs to the LpxB family.

It catalyses the reaction a lipid X + a UDP-2-N,3-O-bis[(3R)-3-hydroxyacyl]-alpha-D-glucosamine = a lipid A disaccharide + UDP + H(+). It participates in bacterial outer membrane biogenesis; LPS lipid A biosynthesis. Its function is as follows. Condensation of UDP-2,3-diacylglucosamine and 2,3-diacylglucosamine-1-phosphate to form lipid A disaccharide, a precursor of lipid A, a phosphorylated glycolipid that anchors the lipopolysaccharide to the outer membrane of the cell. In Paraburkholderia phytofirmans (strain DSM 17436 / LMG 22146 / PsJN) (Burkholderia phytofirmans), this protein is Lipid-A-disaccharide synthase.